A 390-amino-acid polypeptide reads, in one-letter code: Multidrug resistance protein MdtL (390 aa).

The next 12 helical transmembrane spans lie at 4-24 (FLICSFALVLLYPAGIDMYLV), 42-62 (IAFSVYLAGMATAMLFAGKVA), 69-89 (PVAIAGAVIFIIASMLCSRAT), 93-113 (LFLTGRFIQGIGAGCCYVVAF), 131-151 (LLNGITCIVPVLAPVLGHLIM), 158-178 (SLFYTMIAMGIAVCLLSVFIL), 199-221 (LLNRFFLSRLAITTLSVSVILTF), 245-265 (ALTAGISMAVSFSTPFALSVF), 269-289 (TLMLTSQGLFLAAGIVLSLSS), 293-313 (VTLFGLTLICAGFSVGFGVAM), 316-336 (ALGPFSLRAGVASSVLGIAQV), and 353-375 (ALNMLIGILIGCSMVCILLLMTI).

Belongs to the major facilitator superfamily. DHA1 family. MdtL (TC 2.A.1.2.22) subfamily.

Its subcellular location is the cell inner membrane. This is Multidrug resistance protein MdtL from Citrobacter koseri (strain ATCC BAA-895 / CDC 4225-83 / SGSC4696).